The following is a 586-amino-acid chain: Aspartate--tRNA(Asp/Asn) ligase (586 aa).

E175 contacts L-aspartate. Residues 199-202 (QIFK) are aspartate. An L-aspartate-binding site is contributed by R221. Residues 221 to 223 (RDE) and Q230 contribute to the ATP site. H448 contributes to the L-aspartate binding site. An ATP-binding site is contributed by E482. R489 provides a ligand contact to L-aspartate. Position 534-537 (534-537 (GVDR)) interacts with ATP.

Belongs to the class-II aminoacyl-tRNA synthetase family. Type 1 subfamily. In terms of assembly, homodimer.

The protein resides in the cytoplasm. It catalyses the reaction tRNA(Asx) + L-aspartate + ATP = L-aspartyl-tRNA(Asx) + AMP + diphosphate. In terms of biological role, aspartyl-tRNA synthetase with relaxed tRNA specificity since it is able to aspartylate not only its cognate tRNA(Asp) but also tRNA(Asn). Reaction proceeds in two steps: L-aspartate is first activated by ATP to form Asp-AMP and then transferred to the acceptor end of tRNA(Asp/Asn). The protein is Aspartate--tRNA(Asp/Asn) ligase of Syntrophomonas wolfei subsp. wolfei (strain DSM 2245B / Goettingen).